Here is a 257-residue protein sequence, read N- to C-terminus: BTB/POZ domain-containing protein KCTD1 (257 aa).

Positions 1–25 are disordered; sequence MSRPLITRSPASPLNNQGIPTPAQL. Phosphoserine occurs at positions 9 and 12. Over residues 9–25 the composition is skewed to polar residues; it reads SPASPLNNQGIPTPAQL. The region spanning 30–100 is the BTB domain; sequence APVHIDVGGH…LRTSKLLIPD (71 aa).

As to quaternary structure, forms homopentamers. Interacts with KCTD15, probably forming heteropentamers depending on its abundance in a cell-type dependent manner. Interacts with TFAP2A, TFAP2B and TFAP2C via the BTB domain. Sumoylated.

It is found in the nucleus. May repress the transcriptional activity of AP-2 family members, including TFAP2A, TFAP2B and TFAP2C to various extent. In Bos taurus (Bovine), this protein is BTB/POZ domain-containing protein KCTD1 (KCTD1).